A 689-amino-acid polypeptide reads, in one-letter code: MSEKTFLVEIGTEELPPKALRSLAESFAANFTAELDNAGLAHGKVEWFAAPRRLALKVANLAESQPDREVEKRGPAIAQAFDAEGKPSKAAEGWARGCGITVDQAERLKTDKGEWLLYRAHVKGESTEALVPNMVATSLAKLPIPKLMRWGASDVHFVRPVHTVTLLLGDNVIPATILGIQSDRVIRGHRFMGEPEFTIDTADQYPQILLERGKVIADYEARKAKIKADAEEAARKIGGNADLSESLLEEVASLVEWPVVLTAKFEEKFLAVPAEALVYTMKGDQKYFPVYDNAGKLLPNFIFVANIESTDPQQIISGNEKVVRPRLADAEFFFNTDRKKRLEDHLPRLQTVLFQQQLGTLRDKTDRIQALAGWIAGQIGADVNHATRAGLLSKCDLMTNMVFEFTDTQGVMGMHYARHDGEAEDVAVALNEQYQPRFAGDDLPSNPVACALAIADKMDTLAGIFGIGQHPKGDKDPFALRRAALGVLRIIVEKNLALDLQTLTEEAVRLYGDKLTNANVVDDVIDFMLGRFRAWYQDEGYTVDTIQAVLARRPTRPADFDARMKAVSHFRTLEEASALAAANKRVSNILAKATEPLNDIVHASVLKEAAEIELARHLVVLRDKLQPYFADGRYQEALIELAALRAPVDEFFENVMVNAEEKDIRINRLTLLSKLRELFLQVADISLLQ.

The protein belongs to the class-II aminoacyl-tRNA synthetase family. Tetramer of two alpha and two beta subunits.

The protein resides in the cytoplasm. The catalysed reaction is tRNA(Gly) + glycine + ATP = glycyl-tRNA(Gly) + AMP + diphosphate. The sequence is that of Glycine--tRNA ligase beta subunit from Salmonella arizonae (strain ATCC BAA-731 / CDC346-86 / RSK2980).